Here is a 627-residue protein sequence, read N- to C-terminus: Interferon-induced GTP-binding protein MxB (627 aa).

One can recognise a Dynamin-type G domain in the interval 34–307 (DLALPAIAVI…LVHHIQRSLP (274 aa)). The interval 44–51 (GDQSSGKS) is G1 motif. A GTP-binding site is contributed by 44–51 (GDQSSGKS). Residues 69–71 (VTR) are G2 motif. The interval 145-148 (DLPG) is G3 motif. GTP-binding positions include 145–149 (DLPGI) and 214–217 (TKPD). The interval 214-217 (TKPD) is G4 motif. The segment at 246–249 (RCRG) is G5 motif. Positions 541-627 (LSEMKLHLES…MKAQNLLATY (87 aa)) constitute a GED domain.

Belongs to the TRAFAC class dynamin-like GTPase superfamily. Dynamin/Fzo/YdjA family.

Its subcellular location is the cytoplasm. This is Interferon-induced GTP-binding protein MxB (mxb) from Danio rerio (Zebrafish).